Reading from the N-terminus, the 820-residue chain is Protein phosphatase 1 regulatory subunit 29 (820 aa).

The first 22 residues, 1 to 22, serve as a signal peptide directing secretion; the sequence is MLRLGLCAAALLCVCRPGAVRA. Residues 23-397 are Extracellular-facing; the sequence is DCWLIEGDKG…APSTSTTTHY (375 aa). Asparagine 54 carries N-linked (GlcNAc...) asparagine glycosylation. 5 LRR repeats span residues 56-77, 80-101, 104-125, 128-149, and 152-173; these read TVHDLRLNENKLKAVLYSSLNR, NLTDLNLTKNEISYIEDGAFLG, SLQVLQLGYNKLSNLTEGMLRG, RLQFLFVQHNLIEVVTPTAFSE, and SLISIDLSSNRLSRLDGATFAS. Asparagine 80, asparagine 85, and asparagine 117 each carry an N-linked (GlcNAc...) asparagine glycan. Positions 185–247 constitute an LRRCT domain; sequence NPFNCECDLF…ITVLQAKCRN (63 aa). N-linked (GlcNAc...) asparagine glycans are attached at residues asparagine 205 and asparagine 247. Residues 250-294 are disordered; that stretch reads LPARPVSHPTPYSTDAQREPDENSGFNPDEILSVEPPASSTTDAS. The 88-residue stretch at 292-379 folds into the Fibronectin type-III domain; sequence DASAGPAIKL…FNHTCLTFTT (88 aa). A helical membrane pass occupies residues 398–418; it reads IMTILGCLFGMVIVLGAVYYC. Residues 419-820 are Cytoplasmic-facing; the sequence is LRKRRMQEEK…WKGVSAQQKL (402 aa). Disordered stretches follow at residues 508 to 527 and 589 to 612; these read GAGGDGLARPEDDLPDLENG and SATGPGALERPSFLSPPYKESSHH. Serine 619, serine 668, and serine 672 each carry phosphoserine. The tract at residues 654-677 is disordered; sequence TGLAKGDSKYIEKGSPLNSPLDRL.

Interacts with PPP1CA.

It is found in the membrane. Its function is as follows. Inhibits phosphatase activity of protein phosphatase 1 (PP1) complexes. The sequence is that of Protein phosphatase 1 regulatory subunit 29 (ELFN2) from Homo sapiens (Human).